The sequence spans 132 residues: MSPRPLAWALVLLGAALAVALALGSAPAPGAREKLCGHHFVRALVRVCGGPRWSSEDGRRVAGGDRELLQWLEGRHLHGQVSDGDPMLVLVPQALPQASLHHHHRRAAATNPAHYCCLSGCSRQDLLTLCPH.

The N-terminal stretch at Met-1–Gly-24 is a signal peptide. 3 disulfide bridges follow: Cys-36/Cys-117, Cys-48/Cys-130, and Cys-116/Cys-121. A propeptide spans Val-61 to His-104 (c peptide like).

It belongs to the insulin family. Heterodimer of a B chain and an A chain linked by two disulfide bonds. More strongly expressed in testis than in ovary.

The protein resides in the secreted. In terms of biological role, seems to play a role in testicular function. May be a trophic hormone with a role in testicular descent in fetal life. Is a ligand for LGR8 receptor. This is Insulin-like 3 (INSL3) from Canis lupus familiaris (Dog).